The primary structure comprises 261 residues: Succinate dehydrogenase iron-sulfur subunit (261 aa).

Residues 28-119 (RKVQVYRYDP…DIKIYPLPHM (92 aa)) enclose the 2Fe-2S ferredoxin-type domain. 3 residues coordinate [2Fe-2S] cluster: cysteine 80, cysteine 85, and cysteine 100. A 4Fe-4S ferredoxin-type domain is found at 161 to 191 (DREKLDGLYECILCACCSTSCPSYWWNSDKY). Residues cysteine 171, cysteine 174, and cysteine 177 each coordinate [4Fe-4S] cluster. Cysteine 181 is a [3Fe-4S] cluster binding site. Tryptophan 186 provides a ligand contact to a ubiquinone. Residues cysteine 228 and cysteine 234 each coordinate [3Fe-4S] cluster. Cysteine 238 contacts [4Fe-4S] cluster.

It belongs to the succinate dehydrogenase/fumarate reductase iron-sulfur protein family. In terms of assembly, part of an enzyme complex containing four subunits: a flavoprotein, an iron-sulfur, cytochrome b-556, and a hydrophobic anchor protein. [2Fe-2S] cluster is required as a cofactor. The cofactor is [3Fe-4S] cluster. Requires [4Fe-4S] cluster as cofactor.

It carries out the reaction a quinone + succinate = fumarate + a quinol. It functions in the pathway carbohydrate metabolism; tricarboxylic acid cycle; fumarate from succinate (bacterial route): step 1/1. The polypeptide is Succinate dehydrogenase iron-sulfur subunit (sdhB) (Rickettsia typhi (strain ATCC VR-144 / Wilmington)).